A 658-amino-acid polypeptide reads, in one-letter code: Transcription factor cep-1 (658 aa).

A DNA-binding region spans residues 238-428; the sequence is EEWLTFEVKK…RDWKNFCEKR (191 aa). Cysteine 319, histidine 322, cysteine 375, and cysteine 379 together coordinate Zn(2+). Residues 450–477 form a disordered region; the sequence is QSSLHSGPSSPEKVTDTSQMFQSTSSSS. A compositionally biased stretch (low complexity) spans 466-476; sequence TSQMFQSTSSS. Residues 535-564 form a required for tertiary structure stability of the protein region; the sequence is QYGLQRQVKLSEKEYSKFVAFFAKEGENEI.

It belongs to the p53 family. In terms of assembly, homodimer. Interacts (via C-terminus domain) with prmt-5; not methylated by prmt-5. Interacts with cbp-1 (via HAT domain); cep-1 transcriptional activity may be inhibited by interaction with methylated cbp-1. Component of a complex that contains prmt-5 and cbp-1. Interacts with ape-1; the interaction inhibits pro-apoptotic activity of cep-1. Zn(2+) serves as cofactor. Phosphorylated in response to IR-induced DNA damage which is thought to be mediated by akt-1.

Its subcellular location is the nucleus. In terms of biological role, transcriptional activator that binds the same DNA consensus sequence as p53. Has a role in normal development to ensure proper meiotic chromosome segregation. Promotes apoptosis under conditions of cellular and genotoxic stress in response to DNA damage, hypoxia, or starvation. However, not required for DNA repair in response to UV-C or to regulate cell-cycle progression. Regulates germline apoptosis in response to DNA damage. Required for induction of ced-13 in response to DNA damage. Its pro-apoptotic activity is inhibited when bound to ape-1 in vitro. Regulates germline proliferation by activating phg-1. Regulates DNA damage-induced apoptosis by inducing transcription of the programmed cell death activator egl-1. Negatively regulates lifespan. The chain is Transcription factor cep-1 from Caenorhabditis briggsae.